The following is a 938-amino-acid chain: Nitrate reductase (938 aa).

One can recognise a 4Fe-4S Mo/W bis-MGD-type domain in the interval Met-1 to Asn-64. Cys-8, Cys-11, Cys-15, and Cys-50 together coordinate [4Fe-4S] cluster.

Belongs to the prokaryotic molybdopterin-containing oxidoreductase family. NasA/NapA/NarB subfamily. [4Fe-4S] cluster serves as cofactor. It depends on Mo-bis(molybdopterin guanine dinucleotide) as a cofactor.

The protein resides in the cytoplasm. It carries out the reaction nitrate + a quinol = a quinone + nitrite + H2O. Its pathway is nitrogen metabolism; nitrate reduction (assimilation). Its function is as follows. Nitrate reductase is a key enzyme involved in the first step of nitrate assimilation in plants, fungi and bacteria. The sequence is that of Nitrate reductase from Shewanella frigidimarina (strain NCIMB 400).